We begin with the raw amino-acid sequence, 396 residues long: S-arrestin (396 aa).

Belongs to the arrestin family.

Its function is as follows. Arrestin is one of the major proteins of the ros (retinal rod outer segments); it binds to photoactivated-phosphorylated rhodopsin, thereby apparently preventing the transducin-mediated activation of phosphodiesterase. The polypeptide is S-arrestin (Aquarana catesbeiana (American bullfrog)).